The following is a 100-amino-acid chain: Urease subunit gamma (100 aa).

This sequence belongs to the urease gamma subunit family. In terms of assembly, heterotrimer of UreA (gamma), UreB (beta) and UreC (alpha) subunits. Three heterotrimers associate to form the active enzyme.

It is found in the cytoplasm. The enzyme catalyses urea + 2 H2O + H(+) = hydrogencarbonate + 2 NH4(+). Its pathway is nitrogen metabolism; urea degradation; CO(2) and NH(3) from urea (urease route): step 1/1. Functionally, expression of the urease operon increases the likelihood of bacterial survival by contributing to acid resistance in vitro and in vivo in BALB/c mice. Y.enterocolitica enters the body via an oral path and must survive the acidic stomach before being able to colonize the intestinal mucosa. The sequence is that of Urease subunit gamma from Yersinia enterocolitica.